The sequence spans 2151 residues: Calpain-type cysteine protease DEK1 (2151 aa).

The first 32 residues, 1-32, serve as a signal peptide directing secretion; the sequence is MEGDERGVLLACVISGTLFTVFGSGSFWILWA. The Extracellular portion of the chain corresponds to 33 to 69; it reads VNWRPWRLYSWIFARKWPKVLQGPQLDILCGVLSLFA. A helical transmembrane segment spans residues 70 to 90; the sequence is WIVVVSPIAILIGWGSWLIVI. Residues 91 to 94 lie on the Cytoplasmic side of the membrane; the sequence is LDRH. A helical transmembrane segment spans residues 95–115; the sequence is IIGLAIIMAGTALLLAFYSIM. Topologically, residues 116–126 are extracellular; it reads LWWRTQWQSSR. Residues 127–147 form a helical membrane-spanning segment; that stretch reads AVALLLLLGVALLCAYELCAV. Residues 148–163 lie on the Cytoplasmic side of the membrane; the sequence is YVTAGAHASQQYSPSG. The helical transmembrane segment at 164 to 184 threads the bilayer; it reads FFFGVSAIALAINMLFICRMV. Topologically, residues 185-235 are extracellular; sequence FNGNGLDVDEYVRRAYKFAYSDCIEVGPVACLPEPPDPNELYPRQTSRASH. A helical transmembrane segment spans residues 236–256; that stretch reads LGLLYLGSLVVLLAYSVLYGL. Residues 257–263 are Cytoplasmic-facing; sequence TARESRW. Residues 264-284 form a helical membrane-spanning segment; that stretch reads LGGITSAAVIVLDWNIGACLY. Residues 285–293 are Extracellular-facing; sequence GFKLLQNRV. A helical transmembrane segment spans residues 294–314; that stretch reads LALFVAGISRLFLICFGIHYW. Residues 315-319 lie on the Cytoplasmic side of the membrane; sequence YLGHC. Residues 320-340 traverse the membrane as a helical segment; it reads ISYIFVASVLSGAAVSRHLSI. At 341-615 the chain is on the extracellular side; it reads TDPSAARRDA…LLLHHVAGTP (275 aa). Disordered regions lie at residues 363–393 and 405–442; these read RRKEQNSSSSSSDGCGSSIKRSSSIDAGHTG and CTADNLTRTGSSQEGINSDKSEESGRPSLGLRSSSCRS. Over residues 369-388 the composition is skewed to low complexity; sequence SSSSSSDGCGSSIKRSSSID. Residues 405–420 are compositionally biased toward polar residues; the sequence is CTADNLTRTGSSQEGI. Residues 430–442 are compositionally biased toward low complexity; the sequence is RPSLGLRSSSCRS. A helical membrane pass occupies residues 616-636; it reads ERAWGLFSLVFILETIIVAIF. Topologically, residues 637–652 are cytoplasmic; it reads RPKTITIINSSHQQFE. Residues 653-673 form a helical membrane-spanning segment; sequence FGFSVLLLSPVVCSIMAFLRS. Residues 674–686 lie on the Extracellular side of the membrane; the sequence is LQVEEMALTSKSR. A helical membrane pass occupies residues 687–707; sequence KYGFVAWLLSTSVGLSLSFLS. Over 708-711 the chain is Cytoplasmic; it reads KSSV. The helical transmembrane segment at 712 to 732 threads the bilayer; the sequence is LLGISLTVPLMAACLSIAVPI. Topologically, residues 733 to 760 are extracellular; that stretch reads WMHNGYQFWVPQLSCGDQARDLRSPRIK. Residues 761–782 traverse the membrane as a helical segment; the sequence is GFILWICVVLFAGSVISLGAII. Residues 783-813 lie on the Cytoplasmic side of the membrane; it reads SAKPLDDLKYKLFSARENNVTSPYTSSVYLG. The chain crosses the membrane as a helical span at residues 814 to 834; it reads WAMSSGIALVVTAILPIVSWF. Residues 835–844 are Extracellular-facing; it reads ATYRFSHSSA. The helical transmembrane segment at 845-865 threads the bilayer; that stretch reads VCLMIFSVVLVAFCGTSYLEV. At 866 to 878 the chain is on the cytoplasmic side; that stretch reads VKSRDDQLPTKGD. Residues 879–899 traverse the membrane as a helical segment; that stretch reads FLAALLPLACIPALLSLCCGM. Residues 900-912 lie on the Extracellular side of the membrane; the sequence is VKWKDDCWILSRG. Residues 913–933 traverse the membrane as a helical segment; the sequence is VYVFFSIGLLLLFGAIAAVIA. The Cytoplasmic portion of the chain corresponds to 934-936; the sequence is VKP. The helical transmembrane segment at 937–957 threads the bilayer; sequence WTIGVSFLLVLFLMVVTIGVI. Over 958–971 the chain is Extracellular; that stretch reads HLWASNNFYLTRKQ. Residues 972-992 form a helical membrane-spanning segment; sequence TSFVCFLALLLGLAAFLLGWH. Topologically, residues 993-1006 are cytoplasmic; that stretch reads QDKAFAGASVGYFT. The chain crosses the membrane as a helical span at residues 1007 to 1027; that stretch reads FLSLLAGRALAVLLSPPIVVY. Residues 1028–1050 are Extracellular-facing; that stretch reads SPRVLPVYVYDAHADCGKNVSAA. Residues 1051 to 1071 form a helical membrane-spanning segment; sequence FLVLYGIALATEGWGVVASLI. Topologically, residues 1072–2151 are cytoplasmic; sequence IYPPFAGAAV…TKASIVLEAL (1080 aa). Calpain catalytic domains follow at residues 1407–1600 and 1695–1997; these read SGKH…DMID and QFTD…CRVY. Residues C1761, H1919, and N1939 contribute to the active site.

The protein belongs to the peptidase C2 family. Post-translationally, autocatalytic proteolytic cleavage leading to the production of mainly cytoplasmic localized subproducts of about 85 and 120 kDa. Mostly expressed in meristems and organ primordia. Expressed at low levels in young and germinating seeds at 10 ppm and in seedling roots at 67 ppm. Present in most tissues at a low level.

Its subcellular location is the cell membrane. It is found in the endosome membrane. The protein localises to the endoplasmic reticulum membrane. It localises to the cytoplasm. In terms of biological role, essential protease involved in epiderm development. Required for aleurone cell development in the endosperm probably by maintaining and restricting the aleurone and embryonic epidermal L1 cell-layer fates as well as meristems organization. Involved in the maintenance of adaxial/abaxial axis information in developing leaves, probably by regulating cell proliferation and expansion. Does not need calcium ions to be active. Required for the formation of giant cells in sepals by determining cell fate and promoting endoreplication. This is Calpain-type cysteine protease DEK1 from Arabidopsis thaliana (Mouse-ear cress).